The following is a 332-amino-acid chain: Torsin-1A (332 aa).

The N-terminal stretch at 1–20 is a signal peptide; that stretch reads MKLGRAALGLLLLAPSVVQA. An interaction with SNAPIN region spans residues 91-251; sequence KPKKPLTLSL…VSVFNNKNSG (161 aa). Position 102-109 (102-109) interacts with ATP; sequence GWTGTGKN. N-linked (GlcNAc...) asparagine glycans are attached at residues Asn143 and Asn158. Residues 251–332 are interaction with KLC1; sequence GFWHSSLIDR…FTKLDYYYDD (82 aa). The interval 312 to 332 is interaction with SYNE3; the sequence is RVFSDKGCKTVFTKLDYYYDD.

Belongs to the ClpA/ClpB family. Torsin subfamily. In terms of assembly, homohexamer. Interacts with TOR1B; the interaction may be specific of neural tissues. Interacts (ATP-bound) with TOR1AIP1 and TOR1AIP2; the interactions induce ATPase activity. Interacts with KLHL14; preferentially when ATP-free. Interacts with KLC1 (via TPR repeats); the interaction associates TOR1A with the kinesin oligomeric complex. Interacts with COPS4; the interaction associates TOR1A with the CSN complex. Interacts with SNAPIN; the interaction is direct and associates SNAPIN with the CSN complex. Interacts with STON2. Interacts (ATP-bound) with SYNE3 (via KASH domain); the interaction is required for SYNE3 nuclear envelope localization. Interacts with VIM; the interaction associates TOR1A with the cytoskeleton. Interacts with PLEC. Interacts (ATP-bound) with SLC6A3; regulates SLC6A3 transport to the plasma membrane. N-glycosylated.

It is found in the endoplasmic reticulum lumen. The protein resides in the nucleus membrane. Its subcellular location is the cell projection. The protein localises to the growth cone. It localises to the cytoplasmic vesicle membrane. It is found in the cytoplasmic vesicle. The protein resides in the secretory vesicle. Its subcellular location is the synaptic vesicle. The protein localises to the cytoplasm. It localises to the cytoskeleton. The enzyme catalyses ATP + H2O = ADP + phosphate + H(+). Protein with chaperone functions important for the control of protein folding, processing, stability and localization as well as for the reduction of misfolded protein aggregates. Involved in the regulation of synaptic vesicle recycling, controls STON2 protein stability in collaboration with the COP9 signalosome complex (CSN). In the nucleus, may link the cytoskeleton with the nuclear envelope, this mechanism seems to be crucial for the control of nuclear polarity, cell movement and, specifically in neurons, nuclear envelope integrity. Participates in the cellular trafficking and may regulate the subcellular location of multipass membrane proteins such as the dopamine transporter SLC6A3, leading to the modulation of dopamine neurotransmission. In the endoplasmic reticulum, plays a role in the quality control of protein folding by increasing clearance of misfolded proteins such as SGCE variants or holding them in an intermediate state for proper refolding. May have a redundant function with TOR1B in non-neural tissues. The polypeptide is Torsin-1A (TOR1A) (Macaca fascicularis (Crab-eating macaque)).